The sequence spans 145 residues: Protein MMF1, mitochondrial (145 aa).

The N-terminal 17 residues, 1 to 17 (MFLRNSVLRTAPVLRRG), are a transit peptide targeting the mitochondrion.

This sequence belongs to the RutC family.

Its subcellular location is the mitochondrion matrix. Its function is as follows. Plays a role in the maintenance of mitochondrial DNA. This Saccharomyces cerevisiae (strain ATCC 204508 / S288c) (Baker's yeast) protein is Protein MMF1, mitochondrial (MMF1).